The primary structure comprises 571 residues: Plastidial pyruvate kinase 3, chloroplastic (571 aa).

The transit peptide at 1–55 (MAAYGQISSGMTVDPQVLSSSRNIGVSLSPLRRTLIGAGVRSTSISLRQCSLSVR) directs the protein to the chloroplast. Arg129 provides a ligand contact to substrate. K(+) contacts are provided by Asn131, Ser133, Asp164, and Thr165. 131–134 (NMSH) is a binding site for ATP. Arg171 contacts ATP. Substrate is bound at residue Lys314. Mg(2+) is bound at residue Glu316. Residues Gly339, Asp340, and Thr372 each coordinate substrate. Mg(2+) is bound at residue Asp340.

The protein belongs to the pyruvate kinase family. As to quaternary structure, oligomer of alpha and beta subunits. Mg(2+) serves as cofactor. Requires K(+) as cofactor. Expressed at low levels in roots, leaves, inflorescences, siliques, pollen, seeds and flowers.

Its subcellular location is the plastid. The protein resides in the chloroplast stroma. The catalysed reaction is pyruvate + ATP = phosphoenolpyruvate + ADP + H(+). Its pathway is carbohydrate degradation; glycolysis; pyruvate from D-glyceraldehyde 3-phosphate: step 5/5. In terms of biological role, required for plastidial pyruvate kinase activity. In Arabidopsis thaliana (Mouse-ear cress), this protein is Plastidial pyruvate kinase 3, chloroplastic (PKP3).